The following is a 311-amino-acid chain: Probable deoxyhypusine synthase (311 aa).

The Nucleophile role is filled by Lys284.

The protein belongs to the deoxyhypusine synthase family. Requires NAD(+) as cofactor.

The enzyme catalyses [eIF5A protein]-L-lysine + spermidine = [eIF5A protein]-deoxyhypusine + propane-1,3-diamine. Its pathway is protein modification; eIF5A hypusination. Its function is as follows. Catalyzes the NAD-dependent oxidative cleavage of spermidine and the subsequent transfer of the butylamine moiety of spermidine to the epsilon-amino group of a specific lysine residue of the eIF-5A precursor protein to form the intermediate deoxyhypusine residue. The polypeptide is Probable deoxyhypusine synthase (Picrophilus torridus (strain ATCC 700027 / DSM 9790 / JCM 10055 / NBRC 100828 / KAW 2/3)).